A 1208-amino-acid polypeptide reads, in one-letter code: E3 ubiquitin-protein ligase DZIP3 (1208 aa).

Residues 10–29 (VRHPAVEDQRKEETENKLEK) show a composition bias toward basic and acidic residues. Disordered regions lie at residues 10 to 38 (VRHP…NKQE) and 637 to 698 (GTSI…PHSV). 4 coiled-coil regions span residues 14-43 (AVED…DIPT), 647-676 (ESLK…SKED), 792-853 (IASL…SKLN), and 904-939 (QLKA…KVKQ). The segment covering 637 to 647 (GTSIPSESSTE) has biased composition (polar residues). Residues 648–657 (SLKDLQEVKS) show a composition bias toward basic and acidic residues. Residues 658–669 (KQRKKKKTKNKK) show a composition bias toward basic residues. Positions 670-693 (NKDSKEDQVPYVVEKEEQLRKEQA) are enriched in basic and acidic residues. Positions 1088 to 1145 (KSQSQGKSVSNVNCVSPSHSPSQPDAAQPPKPAWRPLTSQGPATWEGASNPDEEEEEE) are disordered. Residues 1089-1112 (SQSQGKSVSNVNCVSPSHSPSQPD) are compositionally biased toward polar residues. The segment at 1148 to 1188 (CVICHENLSPENLSVLPCAHKFHAQCIRPWLMQQGTCPTCR) adopts an RING-type; atypical zinc-finger fold.

In terms of assembly, interacts with DAZ proteins. As to expression, widely expressed at low level. Highly expressed in skeletal muscle, kidney and heart. Expressed at low level in placenta, lung, brain, liver and pancreas.

It is found in the cytoplasm. It carries out the reaction S-ubiquitinyl-[E2 ubiquitin-conjugating enzyme]-L-cysteine + [acceptor protein]-L-lysine = [E2 ubiquitin-conjugating enzyme]-L-cysteine + N(6)-ubiquitinyl-[acceptor protein]-L-lysine.. It functions in the pathway protein modification; protein ubiquitination. E3 Ubiquitin ligase proteins mediate ubiquitination and subsequent proteasomal degradation of target proteins. E3 ubiquitin ligases accept ubiquitin from an E2 ubiquitin-conjugating enzyme in the form of a thioester and then directly transfers the ubiquitin to targeted substrates. Able to specifically bind RNA. The chain is E3 ubiquitin-protein ligase DZIP3 (DZIP3) from Homo sapiens (Human).